The sequence spans 435 residues: Amidase 1 (435 aa).

Catalysis depends on charge relay system residues Lys38 and Ser115. Ser139 functions as the Acyl-ester intermediate in the catalytic mechanism.

Belongs to the amidase family.

The protein resides in the cytoplasm. Its subcellular location is the nucleus. The protein localises to the nucleoplasm. The catalysed reaction is a monocarboxylic acid amide + H2O = a monocarboxylate + NH4(+). Its function is as follows. Amidase involved in auxin biosynthesis. Converts indole-3-acetamide (IAM) to indole-3-acetate, and phenyl-2-acetamide (PAM) to phenyl-2-acetate. Substrate preference is PAM &gt; IAM. The chain is Amidase 1 from Oryza sativa subsp. japonica (Rice).